We begin with the raw amino-acid sequence, 301 residues long: UDP-N-acetylenolpyruvoylglucosamine reductase (301 aa).

Positions 29–195 (KIGGPADVFV…VEAIFSLTRG (167 aa)) constitute an FAD-binding PCMH-type domain. Residue Arg-174 is part of the active site. The active-site Proton donor is the Ser-224. Glu-294 is a catalytic residue.

Belongs to the MurB family. Requires FAD as cofactor.

It localises to the cytoplasm. It carries out the reaction UDP-N-acetyl-alpha-D-muramate + NADP(+) = UDP-N-acetyl-3-O-(1-carboxyvinyl)-alpha-D-glucosamine + NADPH + H(+). It participates in cell wall biogenesis; peptidoglycan biosynthesis. Cell wall formation. This is UDP-N-acetylenolpyruvoylglucosamine reductase from Halalkalibacterium halodurans (strain ATCC BAA-125 / DSM 18197 / FERM 7344 / JCM 9153 / C-125) (Bacillus halodurans).